A 122-amino-acid polypeptide reads, in one-letter code: Large ribosomal subunit protein uL14 (122 aa).

The protein belongs to the universal ribosomal protein uL14 family. In terms of assembly, part of the 50S ribosomal subunit. Forms a cluster with proteins L3 and L19. In the 70S ribosome, L14 and L19 interact and together make contacts with the 16S rRNA in bridges B5 and B8.

Its function is as follows. Binds to 23S rRNA. Forms part of two intersubunit bridges in the 70S ribosome. This chain is Large ribosomal subunit protein uL14, found in Azoarcus sp. (strain BH72).